The sequence spans 107 residues: uncharacterized protein (107 aa).

A disordered region spans residues 23 to 64 (SASSSSSTRIPSGFASATSSKSNSSTKSSPSPINSFNNKTNN). A compositionally biased stretch (low complexity) spans 37–57 (ASATSSKSNSSTKSSPSPINS). Residues 76 to 98 (LAFGIVEFMVFNGMISTITTTTF) traverse the membrane as a helical segment.

Its subcellular location is the membrane. This is an uncharacterized protein from Dictyostelium discoideum (Social amoeba).